Here is a 260-residue protein sequence, read N- to C-terminus: Triosephosphate isomerase (260 aa).

Position 11–13 (11–13 (NWK)) interacts with substrate. His-103 serves as the catalytic Electrophile. Glu-175 serves as the catalytic Proton acceptor. Substrate-binding positions include Gly-181, Ser-220, and 241–242 (GG).

This sequence belongs to the triosephosphate isomerase family. Homodimer.

Its subcellular location is the cytoplasm. It carries out the reaction D-glyceraldehyde 3-phosphate = dihydroxyacetone phosphate. Its pathway is carbohydrate biosynthesis; gluconeogenesis. The protein operates within carbohydrate degradation; glycolysis; D-glyceraldehyde 3-phosphate from glycerone phosphate: step 1/1. In terms of biological role, involved in the gluconeogenesis. Catalyzes stereospecifically the conversion of dihydroxyacetone phosphate (DHAP) to D-glyceraldehyde-3-phosphate (G3P). In Shewanella sp. (strain W3-18-1), this protein is Triosephosphate isomerase.